We begin with the raw amino-acid sequence, 294 residues long: N-acetylmuramic acid 6-phosphate etherase (294 aa).

Residues 54 to 217 enclose the SIS domain; that stretch reads VIKSFEEEGR…STASMIGVGK (164 aa). The active-site Proton donor is the E82. The active site involves E113.

This sequence belongs to the GCKR-like family. MurNAc-6-P etherase subfamily. In terms of assembly, homodimer.

The catalysed reaction is N-acetyl-D-muramate 6-phosphate + H2O = N-acetyl-D-glucosamine 6-phosphate + (R)-lactate. It functions in the pathway amino-sugar metabolism; N-acetylmuramate degradation. Its function is as follows. Specifically catalyzes the cleavage of the D-lactyl ether substituent of MurNAc 6-phosphate, producing GlcNAc 6-phosphate and D-lactate. The sequence is that of N-acetylmuramic acid 6-phosphate etherase from Bacillus cereus (strain ATCC 10987 / NRS 248).